Here is a 348-residue protein sequence, read N- to C-terminus: Flagellar P-ring protein (348 aa).

A signal peptide spans 1–16 (MRVLTIFLLFMTSIFA).

Belongs to the FlgI family. In terms of assembly, the basal body constitutes a major portion of the flagellar organelle and consists of four rings (L,P,S, and M) mounted on a central rod.

The protein localises to the periplasm. Its subcellular location is the bacterial flagellum basal body. Assembles around the rod to form the L-ring and probably protects the motor/basal body from shearing forces during rotation. The chain is Flagellar P-ring protein from Campylobacter jejuni subsp. jejuni serotype O:6 (strain 81116 / NCTC 11828).